We begin with the raw amino-acid sequence, 535 residues long: CTP synthase (535 aa).

An amidoligase domain region spans residues 1-267 (MTKYIFVTGG…DQIVCDHLKL (267 aa)). Residue Ser13 coordinates CTP. Ser13 is a binding site for UTP. ATP is bound at residue 14–19 (SLGKGI). Residue Tyr54 coordinates L-glutamine. Residue Asp71 participates in ATP binding. The Mg(2+) site is built by Asp71 and Glu141. CTP contacts are provided by residues 148–150 (DIE), 188–193 (KTKPTQ), and Lys224. UTP-binding positions include 188–193 (KTKPTQ) and Lys224. Position 240–242 (240–242 (RDA)) interacts with ATP. A Glutamine amidotransferase type-1 domain is found at 292–534 (KIALVGKYVE…VRASITNKES (243 aa)). Gly354 is a binding site for L-glutamine. The active-site Nucleophile; for glutamine hydrolysis is the Cys381. Residues 382-385 (LGMQ), Glu405, and Arg462 contribute to the L-glutamine site. Active-site residues include His507 and Glu509.

The protein belongs to the CTP synthase family. In terms of assembly, homotetramer.

The catalysed reaction is UTP + L-glutamine + ATP + H2O = CTP + L-glutamate + ADP + phosphate + 2 H(+). The enzyme catalyses L-glutamine + H2O = L-glutamate + NH4(+). It carries out the reaction UTP + NH4(+) + ATP = CTP + ADP + phosphate + 2 H(+). The protein operates within pyrimidine metabolism; CTP biosynthesis via de novo pathway; CTP from UDP: step 2/2. Its activity is regulated as follows. Allosterically activated by GTP, when glutamine is the substrate; GTP has no effect on the reaction when ammonia is the substrate. The allosteric effector GTP functions by stabilizing the protein conformation that binds the tetrahedral intermediate(s) formed during glutamine hydrolysis. Inhibited by the product CTP, via allosteric rather than competitive inhibition. Functionally, catalyzes the ATP-dependent amination of UTP to CTP with either L-glutamine or ammonia as the source of nitrogen. Regulates intracellular CTP levels through interactions with the four ribonucleotide triphosphates. This Bacillus cereus (strain G9842) protein is CTP synthase.